Consider the following 158-residue polypeptide: Cytochrome b562 (158 aa).

4 helical membrane passes run 12–32, 46–66, 87–107, and 121–141; these read ITLHWAIAGLVLFNYIFGETM, AGVGHYLHVVVGLAVLVLTLV, VAAGLQGLLYLLTLLVPALGM, and HVLAANAIMLLALVHAVSALF. The heme b site is built by His-15 and His-53. 2 residues coordinate heme b: His-121 and His-135.

This sequence belongs to the cytochrome b561 family. In terms of assembly, homodimer. It depends on heme b as a cofactor.

It localises to the cell membrane. Its function is as follows. Cytochrome b562 is an integral component of the cytochrome b-c1 complex in the cyclic electron transfer system of photosynthetic bacteria. The protein is Cytochrome b562 of Cereibacter sphaeroides (strain ATCC 17023 / DSM 158 / JCM 6121 / CCUG 31486 / LMG 2827 / NBRC 12203 / NCIMB 8253 / ATH 2.4.1.) (Rhodobacter sphaeroides).